The primary structure comprises 342 residues: Ion-translocating oxidoreductase complex subunit D (342 aa).

3 consecutive transmembrane segments (helical) span residues Gly42–Leu62, Asn68–Pro90, and Ala124–Ala144. Thr171 carries the post-translational modification FMN phosphoryl threonine. The next 5 membrane-spanning stretches (helical) occupy residues Phe200–Ile220, Trp227–Ile247, Phe252–Ala272, Leu286–Pro306, and Ala308–Gln328.

This sequence belongs to the NqrB/RnfD family. The complex is composed of six subunits: RnfA, RnfB, RnfC, RnfD, RnfE and RnfG. Requires FMN as cofactor.

The protein localises to the cell inner membrane. Part of a membrane-bound complex that couples electron transfer with translocation of ions across the membrane. In Alcanivorax borkumensis (strain ATCC 700651 / DSM 11573 / NCIMB 13689 / SK2), this protein is Ion-translocating oxidoreductase complex subunit D.